A 194-amino-acid chain; its full sequence is tRNA (guanosine(18)-2'-O)-methyltransferase (194 aa).

Residues Thr-99, 122–126 (GAEKW), Ile-142, and Leu-151 contribute to the S-adenosyl-L-methionine site.

It belongs to the class IV-like SAM-binding methyltransferase superfamily. RNA methyltransferase TrmH family. As to quaternary structure, monomer.

The enzyme catalyses guanosine(18) in tRNA + S-adenosyl-L-methionine = 2'-O-methylguanosine(18) in tRNA + S-adenosyl-L-homocysteine + H(+). Its activity is regulated as follows. Stimulated by magnesium ions and spermine. Inhibited by S-adenosyl-homocysteine. Its function is as follows. Catalyzes the 2'-O methylation of guanosine at position 18 in tRNA. This chain is tRNA (guanosine(18)-2'-O)-methyltransferase, found in Thermus thermophilus (strain ATCC BAA-163 / DSM 7039 / HB27).